A 130-amino-acid polypeptide reads, in one-letter code: Small ribosomal subunit protein uS8 (130 aa).

Lys88 is modified (N6-succinyllysine).

Belongs to the universal ribosomal protein uS8 family. In terms of assembly, component of the 40S ribosomal subunit. Part of the small subunit (SSU) processome, composed of more than 70 proteins and the RNA chaperone small nucleolar RNA (snoRNA) U3.

It localises to the cytoplasm. The protein resides in the nucleus. It is found in the nucleolus. Its function is as follows. Component of the small ribosomal subunit. Part of the small subunit (SSU) processome, first precursor of the small eukaryotic ribosomal subunit. During the assembly of the SSU processome in the nucleolus, many ribosome biogenesis factors, an RNA chaperone and ribosomal proteins associate with the nascent pre-rRNA and work in concert to generate RNA folding, modifications, rearrangements and cleavage as well as targeted degradation of pre-ribosomal RNA by the RNA exosome. Required for proper erythropoiesis. In Pongo abelii (Sumatran orangutan), this protein is Small ribosomal subunit protein uS8 (RPS15A).